We begin with the raw amino-acid sequence, 233 residues long: tRNA (guanine-N(7)-)-methyltransferase (233 aa).

A disordered region spans residues 1–23 (MSPQDRPSRTTEAFFGRRRGKPV). Residues E64, E89, D116, and D138 each contribute to the S-adenosyl-L-methionine site. D138 is a catalytic residue. Substrate contacts are provided by residues K142, D174, and 212-215 (TRYE).

This sequence belongs to the class I-like SAM-binding methyltransferase superfamily. TrmB family.

It catalyses the reaction guanosine(46) in tRNA + S-adenosyl-L-methionine = N(7)-methylguanosine(46) in tRNA + S-adenosyl-L-homocysteine. It participates in tRNA modification; N(7)-methylguanine-tRNA biosynthesis. Catalyzes the formation of N(7)-methylguanine at position 46 (m7G46) in tRNA. The protein is tRNA (guanine-N(7)-)-methyltransferase of Mesorhizobium japonicum (strain LMG 29417 / CECT 9101 / MAFF 303099) (Mesorhizobium loti (strain MAFF 303099)).